Here is a 481-residue protein sequence, read N- to C-terminus: MTVRVRIAPSPTGNLHIGTARTAVFNWLFARHHGGTFILRIEDTDLERSRPEYTENIMTGLRWLGLNWDEGPFFQSQRLDLYQKAVKQLLDQGLAYRCYTTSEELEALREAQKAKGEAPRYDNRHRHLTPEQEAEFKAQGRSFVIRFKIDDEREIVWNDLVRGKMSWRGSDLGGDMVIARASENDTGQPLYNFVVVIDDIDMQISHVIRGEDHIANTAKQILLYEAFGAKIPEFAHTPLILNMEGRKLSKRDGVTSISDFQQMGFTSEGLVNYMTLLGWSPPDSTQEIFTLEAAAKEFTFERVNKAGAKFDWAKLDWLNSQYIHNTPVDQLTDLLIPYWEAAGYSFAGGRDRPWLEQLVGLLSASLTRLTDAVDMSKLFFSETVELSEEGSKQLQQEGSKAVLEAIIAALEAQTQLTENAAQDIIKQVVKAQNVKKGLVMRSLRVALTGDVHGPDLIQSWLLLNQIGLDKPRLSQAIAASL.

Positions 9–19 (PSPTGNLHIGT) match the 'HIGH' region motif. The short motif at 247–251 (KLSKR) is the 'KMSKS' region element. Position 250 (Lys250) interacts with ATP.

The protein belongs to the class-I aminoacyl-tRNA synthetase family. Glutamate--tRNA ligase type 1 subfamily. In terms of assembly, monomer.

The protein resides in the cytoplasm. The enzyme catalyses tRNA(Glu) + L-glutamate + ATP = L-glutamyl-tRNA(Glu) + AMP + diphosphate. In terms of biological role, catalyzes the attachment of glutamate to tRNA(Glu) in a two-step reaction: glutamate is first activated by ATP to form Glu-AMP and then transferred to the acceptor end of tRNA(Glu). The protein is Glutamate--tRNA ligase of Trichormus variabilis (strain ATCC 29413 / PCC 7937) (Anabaena variabilis).